We begin with the raw amino-acid sequence, 155 residues long: Ribosomal RNA large subunit methyltransferase H (155 aa).

S-adenosyl-L-methionine-binding positions include L73, G104, and 123 to 128 (LSPLTL).

The protein belongs to the RNA methyltransferase RlmH family. In terms of assembly, homodimer.

The protein resides in the cytoplasm. The catalysed reaction is pseudouridine(1915) in 23S rRNA + S-adenosyl-L-methionine = N(3)-methylpseudouridine(1915) in 23S rRNA + S-adenosyl-L-homocysteine + H(+). Its function is as follows. Specifically methylates the pseudouridine at position 1915 (m3Psi1915) in 23S rRNA. This Azotobacter vinelandii (strain DJ / ATCC BAA-1303) protein is Ribosomal RNA large subunit methyltransferase H.